Here is a 671-residue protein sequence, read N- to C-terminus: RNA polymerase sigma factor RpoD (671 aa).

Disordered stretches follow at residues 1-45 (MKKK…SKIK) and 229-260 (DDDE…VSEK). A compositionally biased stretch (basic and acidic residues) spans 251 to 260 (EERKKVVSEK). The tract at residues 436 to 506 (MAKSNLRLVV…SRAIADQART (71 aa)) is sigma-70 factor domain-2. The short motif at 460-463 (DLIQ) is the Interaction with polymerase core subunit RpoC element. Positions 515-591 (DTINRINKVM…DKNIVSSIDH (77 aa)) are sigma-70 factor domain-3. A sigma-70 factor domain-4 region spans residues 604 to 658 (VLDQLNEREKAVIRMRFGLLDDESDRTLEEIGKELNVTRERVRQIESSAIKKLRS). The H-T-H motif DNA-binding region spans 631–650 (LEEIGKELNVTRERVRQIES).

It belongs to the sigma-70 factor family. RpoD/SigA subfamily. As to quaternary structure, interacts transiently with the RNA polymerase catalytic core.

The protein resides in the cytoplasm. Functionally, sigma factors are initiation factors that promote the attachment of RNA polymerase to specific initiation sites and are then released. This sigma factor is the primary sigma factor during exponential growth. The sequence is that of RNA polymerase sigma factor RpoD from Helicobacter pylori (strain ATCC 700392 / 26695) (Campylobacter pylori).